A 224-amino-acid chain; its full sequence is Uracil-DNA glycosylase 2 (224 aa).

D64 (proton acceptor) is an active-site residue.

The protein belongs to the uracil-DNA glycosylase (UDG) superfamily. UNG family.

It is found in the cytoplasm. It catalyses the reaction Hydrolyzes single-stranded DNA or mismatched double-stranded DNA and polynucleotides, releasing free uracil.. Its function is as follows. Excises uracil residues from the DNA which can arise as a result of misincorporation of dUMP residues by DNA polymerase or due to deamination of cytosine. In Listeria monocytogenes serovar 1/2a (strain ATCC BAA-679 / EGD-e), this protein is Uracil-DNA glycosylase 2.